A 466-amino-acid polypeptide reads, in one-letter code: Histidinol dehydrogenase, chloroplastic (466 aa).

A chloroplast-targeting transit peptide spans 1–30 (MSLNLSRLSLLSSPRISISTHAPRKGYVCC). Residues Tyr-155, Gln-217, and Asn-240 each coordinate NAD(+). Substrate is bound by residues Ser-266, Gln-288, and His-291. 2 residues coordinate Zn(2+): Gln-288 and His-291. Residues Glu-356 and His-357 each act as proton acceptor in the active site. The substrate site is built by His-357, Asp-390, Glu-444, and His-449. Asp-390 lines the Zn(2+) pocket. His-449 contacts Zn(2+).

This sequence belongs to the histidinol dehydrogenase family. Zn(2+) serves as cofactor.

Its subcellular location is the plastid. The protein localises to the chloroplast. It catalyses the reaction L-histidinol + 2 NAD(+) + H2O = L-histidine + 2 NADH + 3 H(+). Its pathway is amino-acid biosynthesis; L-histidine biosynthesis; L-histidine from 5-phospho-alpha-D-ribose 1-diphosphate: step 9/9. Functionally, catalyzes the sequential NAD-dependent oxidations of L-histidinol to L-histidinaldehyde and then to L-histidine. The chain is Histidinol dehydrogenase, chloroplastic (HISN8) from Arabidopsis thaliana (Mouse-ear cress).